A 524-amino-acid chain; its full sequence is Portal protein (524 aa).

The stretch at 486 to 516 forms a coiled coil; sequence AMKDILQMTDEEIEQEAKQIEEESKEARFQD. The segment covering 500–516 has biased composition (basic and acidic residues); it reads QEAKQIEEESKEARFQD. The disordered stretch occupies residues 500–524; the sequence is QEAKQIEEESKEARFQDPDQEQEDF.

The protein belongs to the Tevenvirinae portal protein family. As to quaternary structure, homododecamer. Interacts with the large terminase subunit. Interacts with the major capsid protein. Interacts with the capsid vertex protein.

The protein localises to the virion. It localises to the host cell inner membrane. In terms of biological role, forms the portal vertex of the capsid. This portal plays critical roles in head assembly, genome packaging, neck/tail attachment, and genome ejection. The portal protein multimerizes as a single ring-shaped homododecamer arranged around a central channel. Binds to the terminase subunits to form the packaging machine. Attaches to the host inner membrane most likely through interaction with host yidC and forms together with chaperone gp40 an initiator complex to form the prohead. The protein is Portal protein (20) of Enterobacteria phage T4 (Bacteriophage T4).